The primary structure comprises 240 residues: Small ribosomal subunit protein uS2c (240 aa).

This sequence belongs to the universal ribosomal protein uS2 family.

It is found in the plastid. The protein resides in the chloroplast. This chain is Small ribosomal subunit protein uS2c (rps2), found in Cycas taitungensis (Prince sago).